The sequence spans 211 residues: Arginine exporter protein ArgO (211 aa).

6 helical membrane-spanning segments follow: residues 1–21, 37–57, 68–88, 111–131, 147–167, and 179–199; these read MISY…PLGP, LMIA…GIFG, LLAL…FGAL, IIAT…DTFV, WFAL…ALLA, and AQRI…FQLA.

The protein belongs to the LysE/ArgO transporter (TC 2.A.75) family.

It is found in the cell inner membrane. The enzyme catalyses L-arginine(in) = L-arginine(out). In terms of biological role, involved in the export of arginine. Important to control the intracellular level of arginine and the correct balance between arginine and lysine. This is Arginine exporter protein ArgO from Salmonella newport (strain SL254).